The primary structure comprises 152 residues: Adrenodoxin-like protein 2, mitochondrial (152 aa).

A mitochondrion-targeting transit peptide spans 1-29 (MLVINSCRAASRLALRSLNLRSPIATRTF). Residues 41–146 (VNITFVRANG…GLEVHVPSTI (106 aa)) form the 2Fe-2S ferredoxin-type domain. The [2Fe-2S] cluster site is built by C80, C86, C89, and C127.

The protein belongs to the adrenodoxin/putidaredoxin family. [2Fe-2S] cluster is required as a cofactor.

Its subcellular location is the mitochondrion. Required for ecdysteroidogenesis in the prothoracic gland which is necessary for larval to pupal transition. The sequence is that of Adrenodoxin-like protein 2, mitochondrial from Drosophila melanogaster (Fruit fly).